A 184-amino-acid polypeptide reads, in one-letter code: Ras-related protein Rap-1b (184 aa).

Gly-10–Ala-18 contacts GTP. The segment at Gln-25–Met-67 is interaction with KRIT1. Positions Tyr-32–Tyr-40 match the Effector region motif. Position 39 is an ADP-ribosylserine; by botulinum toxin (Ser-39). GTP is bound by residues Asp-57–Thr-61, Asn-116–Asp-119, and Ser-147–Lys-149. Ser-179 carries the phosphoserine; by PKA modification. At Cys-181 the chain carries Cysteine methyl ester. Cys-181 is lipidated: S-geranylgeranyl cysteine. A propeptide spans Gln-182–Leu-184 (removed in mature form).

Belongs to the small GTPase superfamily. Ras family. In terms of assembly, heterodimer with RAP1GAP. Interacts with EPAC2. Interacts with SGSM1. Interacts with SGSM2. Interacts with SGSM3. Interacts with KRIT1. Interacts with RAP1GDS1.

The protein localises to the cell membrane. It is found in the cytoplasm. Its subcellular location is the cytosol. It localises to the cell junction. It catalyses the reaction GTP + H2O = GDP + phosphate + H(+). Activated by guanine nucleotide-exchange factor (GEF) EPAC2 in a cAMP-dependent manner. Its function is as follows. GTP-binding protein that possesses intrinsic GTPase activity. Contributes to the polarizing activity of KRIT1 and CDH5 in the establishment and maintenance of correct endothelial cell polarity and vascular lumen. Required for the localization of phosphorylated PRKCZ, PARD3 and TIAM1 to the cell junction. Plays a role in the establishment of basal endothelial barrier function. This Rattus norvegicus (Rat) protein is Ras-related protein Rap-1b (Rap1b).